The primary structure comprises 146 residues: MRLHLITVGEPKLAYARSGWDEYEKRLRRYHKVQVSRVSGKTQQAESEAILKAAGKSPLILLDPRGKQFSSEKLSEYLDAEALGGHGELAFAIGGPDGHTDALRGQAKLLWSLGELTLPHDLAMLVLVEALYRAATISAGEPYHRG.

S-adenosyl-L-methionine-binding positions include Leu62, Gly94, and 113 to 118 (LGELTL).

Belongs to the RNA methyltransferase RlmH family. In terms of assembly, homodimer.

It is found in the cytoplasm. It carries out the reaction pseudouridine(1915) in 23S rRNA + S-adenosyl-L-methionine = N(3)-methylpseudouridine(1915) in 23S rRNA + S-adenosyl-L-homocysteine + H(+). Functionally, specifically methylates the pseudouridine at position 1915 (m3Psi1915) in 23S rRNA. The polypeptide is Ribosomal RNA large subunit methyltransferase H (Deinococcus radiodurans (strain ATCC 13939 / DSM 20539 / JCM 16871 / CCUG 27074 / LMG 4051 / NBRC 15346 / NCIMB 9279 / VKM B-1422 / R1)).